A 327-amino-acid chain; its full sequence is Auxin-responsive protein IAA18 (327 aa).

Disordered regions lie at residues 26-45, 52-98, and 180-202; these read VKEA…DEDK, GLPG…IGTT, and NLTN…DDKA. The short motif at 49-53 is the EAR-like (transcriptional repression) element; it reads LKLGL. The segment covering 58–69 has biased composition (basic and acidic residues); sequence QEERAADSREKI. The segment covering 70–82 has biased composition (low complexity); sequence QQQQRESSSEPSI. Residues 180 to 189 are compositionally biased toward polar residues; the sequence is NLTNGSSFKQ. Basic and acidic residues predominate over residues 190 to 202; that stretch reads SPERQNDEADDKA. The region spanning 209-313 is the PB1 domain; the sequence is RPLVKINMDG…TVKRLRVMRR (105 aa).

The protein belongs to the Aux/IAA family. In terms of assembly, homodimers and heterodimers. As to expression, highly expressed in flowers. Expressed in roots and etiolated seedlings.

The protein localises to the nucleus. In terms of biological role, aux/IAA proteins are short-lived transcriptional factors that function as repressors of early auxin response genes at low auxin concentrations. This is Auxin-responsive protein IAA18 (IAA18) from Oryza sativa subsp. japonica (Rice).